Reading from the N-terminus, the 447-residue chain is Neuronal acetylcholine receptor subunit alpha-10 (447 aa).

A signal peptide spans 1-24; it reads MGTRSHYLDLGFLLLLFLPAECLG. Topologically, residues 25 to 237 are extracellular; it reads AEGRLAHKLF…FTLLLRRRAA (213 aa). N40 and N56 each carry an N-linked (GlcNAc...) asparagine glycan. Disulfide bonds link C154–C168 and C218–C219. A run of 3 helical transmembrane segments spans residues 238–258, 268–288, and 302–322; these read AYVCNLLLPCVFISLLAPLAF, VSLGVTVLLALTVFQLILAES, and YMATMTMVTFSTALTILIMNL. The Cytoplasmic portion of the chain corresponds to 323 to 425; the sequence is HYCGPNAHPV…WKRLARVMDR (103 aa). The chain crosses the membrane as a helical span at residues 426–446; that stretch reads FFLGIFFCMALVMSLIVLVQA.

Belongs to the ligand-gated ion channel (TC 1.A.9) family. Acetylcholine receptor (TC 1.A.9.1) subfamily. Alpha-10/CHRNA10 sub-subfamily. Forms homo- or heterooligomeric channels in conjunction with CHRNA10. The native outer hair cell receptor may be composed of CHRNA9:CHRNA10 heterooligomers. Found in the stoichiometric form (CHRNA9)2:(CHRNA10)3. In terms of tissue distribution, expressed in the outer hair cells of the cochlea and the neurons of dorsal root ganglia.

It is found in the synaptic cell membrane. Its subcellular location is the cell membrane. It catalyses the reaction Ca(2+)(in) = Ca(2+)(out). The catalysed reaction is Mg(2+)(in) = Mg(2+)(out). The enzyme catalyses K(+)(in) = K(+)(out). It carries out the reaction Na(+)(in) = Na(+)(out). Activated by a myriad of ligands such as acetylcholine. AChR activity is inhibited by the antagonist alpha-conotoxins RgIA and GeXXA, small disulfide-constrained peptides from cone snails. Its function is as follows. Component of neuronal acetylcholine receptors (nAChRs) that function as pentameric, ligand-gated cation channels with high calcium permeability among other activities. nAChRs are excitatory neurotrasnmitter receptors formed by a collection of nAChR subunits known to mediate synaptic transmission in the nervous system and the neuromuscular junction. Each nAchR subunit confers differential attributes to channel properties, including activation, deactivation and desensitization kinetics, pH sensitivity, cation permeability, and binding to allosteric modulators. Forms heteropentamers with CHRNA9. Expressed in the inner ear, in sympathetic neurons and in other non-neuronal cells, such as skin keratinocytes and lymphocytes. nAChR formed by CHRNA9:CHRNA10 mediate central nervous system control of auditory and vestibular sensory processing. The channel is permeable to a range of divalent cations including calcium, the influx of which may activate a potassium current which hyperpolarizes the cell membrane. In the ear, mediates synaptic transmission between efferent olivocochlear fibers and hair cells of the cochlea, this may lead to a reduction in basilar membrane motion, altering the activity of auditory nerve fibers and reducing the range of dynamic hearing. This may protect against acoustic trauma. May also regulate keratinocyte adhesion. The sequence is that of Neuronal acetylcholine receptor subunit alpha-10 (Chrna10) from Rattus norvegicus (Rat).